An 82-amino-acid chain; its full sequence is Acyl carrier protein (82 aa).

The Carrier domain maps to 2-77 (DNVADRVKKV…QAIDYVSAHI (76 aa)). S37 is subject to O-(pantetheine 4'-phosphoryl)serine.

It belongs to the acyl carrier protein (ACP) family. Post-translationally, 4'-phosphopantetheine is transferred from CoA to a specific serine of apo-ACP by AcpS. This modification is essential for activity because fatty acids are bound in thioester linkage to the sulfhydryl of the prosthetic group.

Its subcellular location is the cytoplasm. Its pathway is lipid metabolism; fatty acid biosynthesis. Functionally, carrier of the growing fatty acid chain in fatty acid biosynthesis. The sequence is that of Acyl carrier protein from Acidithiobacillus ferrooxidans (strain ATCC 23270 / DSM 14882 / CIP 104768 / NCIMB 8455) (Ferrobacillus ferrooxidans (strain ATCC 23270)).